Here is a 147-residue protein sequence, read N- to C-terminus: Small ribosomal subunit protein uS5 (147 aa).

One can recognise an S5 DRBM domain in the interval 9–72; sequence FEEVIVDIGR…DDAFKNIIHV (64 aa).

The protein belongs to the universal ribosomal protein uS5 family. Part of the 30S ribosomal subunit. Contacts proteins S4 and S8.

With S4 and S12 plays an important role in translational accuracy. Its function is as follows. Located at the back of the 30S subunit body where it stabilizes the conformation of the head with respect to the body. The protein is Small ribosomal subunit protein uS5 of Campylobacter curvus (strain 525.92).